Reading from the N-terminus, the 244-residue chain is Methanethiol S-methyltransferase (244 aa).

5 helical membrane-spanning segments follow: residues 7-27 (IIYG…AIGF), 41-61 (IAAP…VFAV), 90-110 (LLAS…PAVI), 120-140 (VALW…TFMI), and 181-201 (GFVV…LFAI).

It belongs to the nurim family.

The protein resides in the membrane. The catalysed reaction is methanethiol + S-adenosyl-L-methionine = dimethyl sulfide + S-adenosyl-L-homocysteine + H(+). Catalyzes the methylation of methanethiol (MeSH) to yield dimethylsulphide (DMS). The chain is Methanethiol S-methyltransferase from Mycobacterium tuberculosis (strain ATCC 25618 / H37Rv).